The primary structure comprises 266 residues: Gap junction beta-4 protein (266 aa).

Residues 2–13 lie within the membrane without spanning it; the sequence is NWAFLQGLLSGV. Topologically, residues 14–20 are cytoplasmic; it reads NKYSTVL. Residues 21 to 40 form a helical membrane-spanning segment; the sequence is SRIWLSVVFIFRVLVYVVAA. Topologically, residues 41–73 are extracellular; sequence EEVWDDEQKDFVCNTKQPGCPNVCYDEFFPVSH. 3 cysteine pairs are disulfide-bonded: Cys-53/Cys-175, Cys-60/Cys-169, and Cys-64/Cys-164. The chain crosses the membrane as a helical span at residues 74 to 94; sequence VRLWALQLILVTCPSLLVVMH. The Cytoplasmic portion of the chain corresponds to 95–130; it reads VAYREERERKHHLKHGPNAPSLYDNLSKKRGGLWWT. Residues 131 to 151 form a helical membrane-spanning segment; sequence YLLSLIFKAAVDAGFLYIFHR. Residues 152–184 are Extracellular-facing; sequence LYKDYDMPRVVACSVEPCPHTVDCYISRPTEKK. Residues 185 to 205 traverse the membrane as a helical segment; it reads VFTYFMVTTAAICILLNLSEV. Over 206-266 the chain is Cytoplasmic; it reads FYLVGKRCME…SAPVDAGGYP (61 aa).

This sequence belongs to the connexin family. Beta-type (group I) subfamily. A hemichannel or connexon is composed of a hexamer of connexins. A functional gap junction is formed by the apposition of two hemichannels. Forms heteromeric channels with GJB2.

Its subcellular location is the cell membrane. The protein localises to the cell junction. The protein resides in the gap junction. Functionally, structural component of gap junctions. Gap junctions are dodecameric channels that connect the cytoplasm of adjoining cells. They are formed by the docking of two hexameric hemichannels, one from each cell membrane. Small molecules and ions diffuse from one cell to a neighboring cell via the central pore. The chain is Gap junction beta-4 protein (GJB4) from Homo sapiens (Human).